Reading from the N-terminus, the 70-residue chain is SLLQLRKMIKKMTNKEPILSYSKYGCNCGMAGRGKPVDATDXCCXXHDCCYGKVTSCSTKADSYSYSWEE.

A disulfide bond links Cys28 and Cys44. His47 is an active-site residue. Asp48 contacts Ca(2+).

This sequence belongs to the phospholipase A2 family. Group II subfamily. D49 sub-subfamily. It depends on Ca(2+) as a cofactor. As to expression, expressed by the venom gland.

It localises to the secreted. The catalysed reaction is a 1,2-diacyl-sn-glycero-3-phosphocholine + H2O = a 1-acyl-sn-glycero-3-phosphocholine + a fatty acid + H(+). Snake venom phospholipase A2 (PLA2) that exhibits strong myotoxicity. PLA2 catalyzes the calcium-dependent hydrolysis of the 2-acyl groups in 3-sn-phosphoglycerides. This is Basic phospholipase A2 2 from Trimeresurus stejnegeri (Chinese green tree viper).